Reading from the N-terminus, the 311-residue chain is Oxidoreductase NAD-binding domain-containing protein 1 (311 aa).

An N-terminal signal peptide occupies residues 1–17 (MACAAVMIPGLLRCSVG). The region spanning 50–186 (HMERTASVLR…GGVGINPLLS (137 aa)) is the FAD-binding FR-type domain. Residue 178–183 (GVGINP) participates in NAD(+) binding.

The protein is Oxidoreductase NAD-binding domain-containing protein 1 (OXNAD1) of Pongo abelii (Sumatran orangutan).